We begin with the raw amino-acid sequence, 503 residues long: Inosine-5'-monophosphate dehydrogenase (503 aa).

The K(+) site is built by Gly20 and Ser22. 2 CBS domains span residues Phe103–Val163 and Met167–Ser228. Position 261 to 263 (Asp261 to Ser263) interacts with NAD(+). Residues Asp264, Phe266, Gly314, and Gly316 each coordinate K(+). Gly312 to Gly314 lines the NAD(+) pocket. Ser317 is a binding site for IMP. Cys319 is a binding site for K(+). The active-site Thioimidate intermediate is the Cys319. IMP-binding positions include Asp358–Gly360, Gly381–Arg382, and Tyr405–Gly409. Residue Arg418 is the Proton acceptor of the active site. Glu431 contacts IMP. K(+)-binding residues include Asn460, Glu485, Gly486, and Gly487.

Belongs to the IMPDH/GMPR family. As to quaternary structure, homotetramer. Requires K(+) as cofactor.

The protein localises to the cytoplasm. The enzyme catalyses IMP + NAD(+) + H2O = XMP + NADH + H(+). It participates in purine metabolism; XMP biosynthesis via de novo pathway; XMP from IMP: step 1/1. Mycophenolic acid (MPA) is a non-competitive inhibitor that prevents formation of the closed enzyme conformation by binding to the same site as the amobile flap. In contrast, mizoribine monophosphate (MZP) is a competitive inhibitor that induces the closed conformation. MPA is a potent inhibitor of mammalian IMPDHs but a poor inhibitor of the bacterial enzymes. MZP is a more potent inhibitor of bacterial IMPDH. Its function is as follows. Catalyzes the conversion of inosine 5'-phosphate (IMP) to xanthosine 5'-phosphate (XMP), the first committed and rate-limiting step in the de novo synthesis of guanine nucleotides, and therefore plays an important role in the regulation of cell growth. Could also have a single-stranded nucleic acid-binding activity and could play a role in RNA and/or DNA metabolism. This Tritrichomonas foetus (Trichomonas foetus) protein is Inosine-5'-monophosphate dehydrogenase.